We begin with the raw amino-acid sequence, 430 residues long: GTPase Obg (430 aa).

Residues 1-158 form the Obg domain; sequence MFVDQVKISL…LEVTLELKLL (158 aa). Residues 118–145 form a disordered region; the sequence is RGGRGGRGNSRFATPRNPAPDFSENGEP. The 171-residue stretch at 159-329 folds into the OBG-type G domain; the sequence is ADVGLVGFPS…LLYQIADKLE (171 aa). Residues 165–172, 190–194, 212–215, 282–285, and 310–312 each bind GTP; these read GFPSVGKS, FTTIK, DLPG, NKMD, and STI. The Mg(2+) site is built by Ser172 and Thr192. In terms of domain architecture, OCT spans 352 to 430; that stretch reads KHTPSADKFT…ILGGEFEFVE (79 aa).

The protein belongs to the TRAFAC class OBG-HflX-like GTPase superfamily. OBG GTPase family. As to quaternary structure, monomer. Mg(2+) serves as cofactor.

The protein resides in the cytoplasm. Its function is as follows. An essential GTPase which binds GTP, GDP and possibly (p)ppGpp with moderate affinity, with high nucleotide exchange rates and a fairly low GTP hydrolysis rate. Plays a role in control of the cell cycle, stress response, ribosome biogenesis and in those bacteria that undergo differentiation, in morphogenesis control. This chain is GTPase Obg, found in Staphylococcus epidermidis (strain ATCC 35984 / DSM 28319 / BCRC 17069 / CCUG 31568 / BM 3577 / RP62A).